A 210-amino-acid chain; its full sequence is Ribosomal RNA large subunit methyltransferase E (210 aa).

Residues Gly-60, Trp-62, Asp-80, Asp-96, and Asp-121 each contribute to the S-adenosyl-L-methionine site. Catalysis depends on Lys-161, which acts as the Proton acceptor.

It belongs to the class I-like SAM-binding methyltransferase superfamily. RNA methyltransferase RlmE family.

It localises to the cytoplasm. It catalyses the reaction uridine(2552) in 23S rRNA + S-adenosyl-L-methionine = 2'-O-methyluridine(2552) in 23S rRNA + S-adenosyl-L-homocysteine + H(+). Functionally, specifically methylates the uridine in position 2552 of 23S rRNA at the 2'-O position of the ribose in the fully assembled 50S ribosomal subunit. In Vesicomyosocius okutanii subsp. Calyptogena okutanii (strain HA), this protein is Ribosomal RNA large subunit methyltransferase E.